Consider the following 199-residue polypeptide: MAKVLVLYYSAYGHIEKMAEAVAEGAREAGAEVDIKRVPELVPLEIAQKSHFKLDQAAPVATIADLEHYDAIIVGTGTRFGRMSSQMANFLDQAGGLWMRGALNGKVGAAFTSTATQHGGQEVTLFSIITNLLHFGLVIVGLDYGFAGQGRLDEITGGSPYGATTIAASDGSRQPSETELAGARYQGRRVAEVAGKLKG.

Residues 4–190 (VLVLYYSAYG…AGARYQGRRV (187 aa)) enclose the Flavodoxin-like domain. FMN is bound by residues 10–15 (SAYGHI) and 78–80 (TRF). Tyrosine 12 contacts NAD(+). Substrate is bound at residue tryptophan 98. FMN contacts are provided by residues 113 to 119 (STATQHG) and histidine 134.

It belongs to the WrbA family. FMN serves as cofactor.

The catalysed reaction is a quinone + NADH + H(+) = a quinol + NAD(+). The enzyme catalyses a quinone + NADPH + H(+) = a quinol + NADP(+). The protein is NAD(P)H dehydrogenase (quinone) of Methylocella silvestris (strain DSM 15510 / CIP 108128 / LMG 27833 / NCIMB 13906 / BL2).